A 218-amino-acid chain; its full sequence is GTP cyclohydrolase 1 (218 aa).

Zn(2+)-binding residues include Cys-107, His-110, and Cys-178.

This sequence belongs to the GTP cyclohydrolase I family. In terms of assembly, homomer.

The catalysed reaction is GTP + H2O = 7,8-dihydroneopterin 3'-triphosphate + formate + H(+). Its pathway is cofactor biosynthesis; 7,8-dihydroneopterin triphosphate biosynthesis; 7,8-dihydroneopterin triphosphate from GTP: step 1/1. In Azorhizobium caulinodans (strain ATCC 43989 / DSM 5975 / JCM 20966 / LMG 6465 / NBRC 14845 / NCIMB 13405 / ORS 571), this protein is GTP cyclohydrolase 1.